The primary structure comprises 418 residues: Light-independent protochlorophyllide reductase subunit N (418 aa).

Positions 17, 42, and 103 each coordinate [4Fe-4S] cluster.

The protein belongs to the BchN/ChlN family. As to quaternary structure, protochlorophyllide reductase is composed of three subunits; ChlL, ChlN and ChlB. Forms a heterotetramer of two ChlB and two ChlN subunits. It depends on [4Fe-4S] cluster as a cofactor.

It carries out the reaction chlorophyllide a + oxidized 2[4Fe-4S]-[ferredoxin] + 2 ADP + 2 phosphate = protochlorophyllide a + reduced 2[4Fe-4S]-[ferredoxin] + 2 ATP + 2 H2O. It participates in porphyrin-containing compound metabolism; chlorophyll biosynthesis (light-independent). In terms of biological role, component of the dark-operative protochlorophyllide reductase (DPOR) that uses Mg-ATP and reduced ferredoxin to reduce ring D of protochlorophyllide (Pchlide) to form chlorophyllide a (Chlide). This reaction is light-independent. The NB-protein (ChlN-ChlB) is the catalytic component of the complex. The protein is Light-independent protochlorophyllide reductase subunit N of Prochlorococcus marinus (strain MIT 9313).